Reading from the N-terminus, the 262-residue chain is Serine/arginine-rich splicing factor 10 (262 aa).

One can recognise an RRM domain in the interval 10–88; the sequence is TSLFVRNVAD…RQIEIQFAQG (79 aa). Phosphoserine occurs at positions 23, 106, and 108. A compositionally biased stretch (basic and acidic residues) spans 116 to 126; that stretch reads YRRSRSRSYER. The disordered stretch occupies residues 116–262; that stretch reads YRRSRSRSYE…SWTSPKSSGH (147 aa). Residues S129, S131, and S133 each carry the phosphoserine modification. A compositionally biased stretch (low complexity) spans 134–150; it reads FDYNYRRSYSPRNSRPT. Residues S158, S160, and R168 each carry the phosphoserine modification. Composition is skewed to basic residues over residues 165–186 and 194–207; these read FKHR…SKSQ and KSRS…KTRG. Basic and acidic residues predominate over residues 209–234; sequence SKTDSKTHYKSGSRYEKESRKKEPPR. Low complexity predominate over residues 252-262; sequence RSWTSPKSSGH.

It belongs to the splicing factor SR family. The phosphorylated but not the dephosphorylated form interacts with TRA2B/SFRS10. The dephosphorylated form interacts with SNRNP70. Isoform 1 interacts with FUS C-terminus. Isoform 3 interacts with FUS C-terminus. Interacts with YTHDC1, leading to inhibit RNA-binding activity of SRSF10. Post-translationally, phosphorylated. Fully dephosphorylated in mitosis and partially dephosphorylated on heat shock. Widely expressed.

It is found in the nucleus speckle. It localises to the cytoplasm. Splicing factor that in its dephosphorylated form acts as a general repressor of pre-mRNA splicing. Seems to interfere with the U1 snRNP 5'-splice recognition of SNRNP70. Required for splicing repression in M-phase cells and after heat shock. Also acts as a splicing factor that specifically promotes exon skipping during alternative splicing. Interaction with YTHDC1, a RNA-binding protein that recognizes and binds N6-methyladenosine (m6A)-containing RNAs, prevents SRSF10 from binding to its mRNA-binding sites close to m6A-containing regions, leading to inhibit exon skipping during alternative splicing. May be involved in regulation of alternative splicing in neurons, with isoform 1 acting as a positive and isoform 3 as a negative regulator. The polypeptide is Serine/arginine-rich splicing factor 10 (SRSF10) (Homo sapiens (Human)).